Consider the following 335-residue polypeptide: Holliday junction branch migration complex subunit RuvB (335 aa).

The tract at residues 4 to 183 (ADNLNVTSII…FGIVQRLEFY (180 aa)) is large ATPase domain (RuvB-L). ATP is bound by residues Arg23, Gly64, Lys67, Thr68, Thr69, 130–132 (EDY), Arg173, Tyr183, and Arg220. Thr68 is a binding site for Mg(2+). Positions 184 to 254 (PTKDLQNIIS…VAMNALNMLN (71 aa)) are small ATPAse domain (RuvB-S). Residues 257–335 (TAGFNFMDRQ…HFSLKQSRDI (79 aa)) form a head domain (RuvB-H) region. Residues Arg293, Arg312, and Arg317 each coordinate DNA.

It belongs to the RuvB family. As to quaternary structure, homohexamer. Forms an RuvA(8)-RuvB(12)-Holliday junction (HJ) complex. HJ DNA is sandwiched between 2 RuvA tetramers; dsDNA enters through RuvA and exits via RuvB. An RuvB hexamer assembles on each DNA strand where it exits the tetramer. Each RuvB hexamer is contacted by two RuvA subunits (via domain III) on 2 adjacent RuvB subunits; this complex drives branch migration. In the full resolvosome a probable DNA-RuvA(4)-RuvB(12)-RuvC(2) complex forms which resolves the HJ.

The protein resides in the cytoplasm. It carries out the reaction ATP + H2O = ADP + phosphate + H(+). Functionally, the RuvA-RuvB-RuvC complex processes Holliday junction (HJ) DNA during genetic recombination and DNA repair, while the RuvA-RuvB complex plays an important role in the rescue of blocked DNA replication forks via replication fork reversal (RFR). RuvA specifically binds to HJ cruciform DNA, conferring on it an open structure. The RuvB hexamer acts as an ATP-dependent pump, pulling dsDNA into and through the RuvAB complex. RuvB forms 2 homohexamers on either side of HJ DNA bound by 1 or 2 RuvA tetramers; 4 subunits per hexamer contact DNA at a time. Coordinated motions by a converter formed by DNA-disengaged RuvB subunits stimulates ATP hydrolysis and nucleotide exchange. Immobilization of the converter enables RuvB to convert the ATP-contained energy into a lever motion, pulling 2 nucleotides of DNA out of the RuvA tetramer per ATP hydrolyzed, thus driving DNA branch migration. The RuvB motors rotate together with the DNA substrate, which together with the progressing nucleotide cycle form the mechanistic basis for DNA recombination by continuous HJ branch migration. Branch migration allows RuvC to scan DNA until it finds its consensus sequence, where it cleaves and resolves cruciform DNA. In Baumannia cicadellinicola subsp. Homalodisca coagulata, this protein is Holliday junction branch migration complex subunit RuvB.